The following is a 211-amino-acid chain: MGKRPIIIGVAGGTGSGKTTVAKEIFYQFNEKSIVLIEQDAYYKDQSQLSLEERLQTNYDHPLAFDNDLLIEHLHSLLNGQAIEKPVYDYKLHTRSNEVILVEPKDVIILEGILLLEDERLRELMDIKLFVDTDADIRIIRRMVRDIRERGRTLESVIEQYTKVVRPMHMQFIEPTKRYADVIIPEGGQNRVAIDLMVTKIRAIIEEKAVL.

An ATP-binding site is contributed by 12–19 (GGTGSGKT).

The protein belongs to the uridine kinase family.

The protein localises to the cytoplasm. The catalysed reaction is uridine + ATP = UMP + ADP + H(+). It catalyses the reaction cytidine + ATP = CMP + ADP + H(+). The protein operates within pyrimidine metabolism; CTP biosynthesis via salvage pathway; CTP from cytidine: step 1/3. It participates in pyrimidine metabolism; UMP biosynthesis via salvage pathway; UMP from uridine: step 1/1. The polypeptide is Uridine kinase (Halalkalibacterium halodurans (strain ATCC BAA-125 / DSM 18197 / FERM 7344 / JCM 9153 / C-125) (Bacillus halodurans)).